Reading from the N-terminus, the 260-residue chain is Acetylglutamate kinase (260 aa).

Substrate-binding positions include 45–46 (GG), R67, and N159.

Belongs to the acetylglutamate kinase family. ArgB subfamily.

The protein localises to the cytoplasm. The enzyme catalyses N-acetyl-L-glutamate + ATP = N-acetyl-L-glutamyl 5-phosphate + ADP. It functions in the pathway amino-acid biosynthesis; L-arginine biosynthesis; N(2)-acetyl-L-ornithine from L-glutamate: step 2/4. Catalyzes the ATP-dependent phosphorylation of N-acetyl-L-glutamate. This chain is Acetylglutamate kinase, found in Colwellia psychrerythraea (strain 34H / ATCC BAA-681) (Vibrio psychroerythus).